Here is a 231-residue protein sequence, read N- to C-terminus: 5'-methylthioadenosine/S-adenosylhomocysteine nucleosidase (231 aa).

Glu12 acts as the Proton acceptor in catalysis. Substrate-binding positions include Gly78, Val153, and 174–175 (ME). Asp198 (proton donor) is an active-site residue.

The protein belongs to the PNP/UDP phosphorylase family. MtnN subfamily.

It carries out the reaction S-adenosyl-L-homocysteine + H2O = S-(5-deoxy-D-ribos-5-yl)-L-homocysteine + adenine. The enzyme catalyses S-methyl-5'-thioadenosine + H2O = 5-(methylsulfanyl)-D-ribose + adenine. It catalyses the reaction 5'-deoxyadenosine + H2O = 5-deoxy-D-ribose + adenine. Its pathway is amino-acid biosynthesis; L-methionine biosynthesis via salvage pathway; S-methyl-5-thio-alpha-D-ribose 1-phosphate from S-methyl-5'-thioadenosine (hydrolase route): step 1/2. Its function is as follows. Catalyzes the irreversible cleavage of the glycosidic bond in both 5'-methylthioadenosine (MTA) and S-adenosylhomocysteine (SAH/AdoHcy) to adenine and the corresponding thioribose, 5'-methylthioribose and S-ribosylhomocysteine, respectively. Also cleaves 5'-deoxyadenosine, a toxic by-product of radical S-adenosylmethionine (SAM) enzymes, into 5-deoxyribose and adenine. The protein is 5'-methylthioadenosine/S-adenosylhomocysteine nucleosidase of Vibrio vulnificus (strain YJ016).